The following is a 42-amino-acid chain: Potassium channel toxin gamma-KTx 1.5 (42 aa).

Cystine bridges form between cysteine 5–cysteine 23, cysteine 11–cysteine 34, cysteine 20–cysteine 39, and cysteine 24–cysteine 41.

Belongs to the ergtoxin family. Gamma-KTx 1 subfamily. Expressed by the venom gland.

It localises to the secreted. Its function is as follows. Blocks Kv11/ERG potassium channels. The sequence is that of Potassium channel toxin gamma-KTx 1.5 from Centruroides limpidus (Mexican scorpion).